The following is an 861-amino-acid chain: Nuclear pore complex protein NUP93A (861 aa).

It belongs to the nucleoporin interacting component (NIC) family. In terms of assembly, part of the nuclear pore complex (NPC). The NPC has an eight-fold symmetrical structure comprising a central transport channel and two rings, the cytoplasmic and nuclear rings, to which eight filaments are attached. The cytoplasmic filaments have loose ends, while the nuclear filaments are joined in a distal ring, forming a nuclear basket. NPCs are highly dynamic in configuration and composition, and can be devided in 3 subcomplexes, the NUP62 subcomplex, the NUP107-160 subcomplex and the NUP93 subcomplex, containing approximately 30 different nucleoporin proteins.

The protein localises to the nucleus envelope. The protein resides in the nucleus. It localises to the nuclear pore complex. The sequence is that of Nuclear pore complex protein NUP93A from Arabidopsis thaliana (Mouse-ear cress).